A 67-amino-acid chain; its full sequence is UPF0337 protein SP_1805 (67 aa).

The tract at residues 1–30 (MSVEEKLNQAKGSIKEGVGKAIGDEKMEKE) is disordered.

This sequence belongs to the UPF0337 (CsbD) family.

The sequence is that of UPF0337 protein SP_1805 from Streptococcus pneumoniae serotype 4 (strain ATCC BAA-334 / TIGR4).